Here is a 121-residue protein sequence, read N- to C-terminus: Protein yippee (121 aa).

The Yippee domain maps to 13 to 110 (KLFNCAQCHT…LEYALITEAE (98 aa)). Zn(2+) is bound by residues C17, C20, C73, and C76.

This sequence belongs to the yippee family. Interacts with hemolin.

In Drosophila melanogaster (Fruit fly), this protein is Protein yippee.